Consider the following 225-residue polypeptide: Methylthioribulose-1-phosphate dehydratase (225 aa).

The Zn(2+) site is built by histidine 106 and histidine 108.

It belongs to the aldolase class II family. MtnB subfamily. It depends on Zn(2+) as a cofactor.

It carries out the reaction 5-(methylsulfanyl)-D-ribulose 1-phosphate = 5-methylsulfanyl-2,3-dioxopentyl phosphate + H2O. It participates in amino-acid biosynthesis; L-methionine biosynthesis via salvage pathway; L-methionine from S-methyl-5-thio-alpha-D-ribose 1-phosphate: step 2/6. Its function is as follows. Catalyzes the dehydration of methylthioribulose-1-phosphate (MTRu-1-P) into 2,3-diketo-5-methylthiopentyl-1-phosphate (DK-MTP-1-P). This is Methylthioribulose-1-phosphate dehydratase from Xanthomonas oryzae pv. oryzae (strain KACC10331 / KXO85).